We begin with the raw amino-acid sequence, 332 residues long: D-xylose-binding periplasmic protein (332 aa).

A signal peptide spans 1 to 23; it reads MKIKSALLTLVGALTVFSSSAHS.

This sequence belongs to the bacterial solute-binding protein 2 family.

The protein resides in the periplasm. In terms of biological role, involved in the high-affinity D-xylose membrane transport system. Binds with high affinity to xylose. The sequence is that of D-xylose-binding periplasmic protein (xylF) from Haemophilus influenzae (strain ATCC 51907 / DSM 11121 / KW20 / Rd).